Reading from the N-terminus, the 439-residue chain is Probable RNA-binding protein 23 (439 aa).

Residues 13-159 (MLEAPYKKEE…PVREPVDNLS (147 aa)) are disordered. Basic and acidic residues predominate over residues 17–34 (PYKKEEDEQQRKEVKKDY). Residues 36–57 (SNTTSSTSNSGNETSGSSTIGE) are compositionally biased toward low complexity. The span at 60 to 90 (KKKRSRSHNKSRDRKRSRSRDRDRYRRRNSR) shows a compositional bias: basic residues. The segment covering 103–125 (RSWDRRHGSESRSRDHRREDRVH) has biased composition (basic and acidic residues). Phosphoserine is present on residues Ser128 and Ser149. Residues 144–159 (HFREKSPVREPVDNLS) show a composition bias toward basic and acidic residues. RRM domains follow at residues 166-243 (RTVF…ASQA) and 263-341 (MRLY…HVTE).

This sequence belongs to the splicing factor SR family. Post-translationally, aryl sulfonamide anticancer drugs, such as indisulam (E7070) or E7820, promote ubiquitination and subsequent degradation by the DCX(DCAF15) complex. Aryl sulfonamide anticancer drugs change the substrate specificity of DCAF15 by acting as a molecular glue that promotes binding between DCAF15 and weak affinity interactor RBM23. In terms of tissue distribution, highly expressed in placenta, liver, skeletal muscle, heart and kidney. Expressed at lower levels in the colon, thymus, spleen, small intestine and lung.

The protein localises to the nucleus. In terms of biological role, RNA-binding protein that acts both as a transcription coactivator and pre-mRNA splicing factor. Regulates steroid hormone receptor-mediated transcription, independently of the pre-mRNA splicing factor activity. The polypeptide is Probable RNA-binding protein 23 (Homo sapiens (Human)).